We begin with the raw amino-acid sequence, 694 residues long: Threonine--tRNA ligase (694 aa).

The region spanning 8–74 (NFVNTSVTTH…EETATFTAVP (67 aa)) is the TGS domain. The catalytic stretch occupies residues 273-579 (DHRRLGTELD…LLEHYAGAFP (307 aa)). Zn(2+) contacts are provided by cysteine 378, histidine 429, and histidine 556.

This sequence belongs to the class-II aminoacyl-tRNA synthetase family. Homodimer. The cofactor is Zn(2+).

The protein localises to the cytoplasm. The catalysed reaction is tRNA(Thr) + L-threonine + ATP = L-threonyl-tRNA(Thr) + AMP + diphosphate + H(+). Its function is as follows. Catalyzes the attachment of threonine to tRNA(Thr) in a two-step reaction: L-threonine is first activated by ATP to form Thr-AMP and then transferred to the acceptor end of tRNA(Thr). Also edits incorrectly charged L-seryl-tRNA(Thr). In Corynebacterium efficiens (strain DSM 44549 / YS-314 / AJ 12310 / JCM 11189 / NBRC 100395), this protein is Threonine--tRNA ligase.